The primary structure comprises 981 residues: Ubiquitin carboxyl-terminal hydrolase 37 (981 aa).

The KEN box 1 signature appears at 32-34 (KEN). 2 consecutive short sequence motifs (D-box) follow at residues 71–79 (RLMLTLQDN) and 96–105 (RLFLDAVHQN). Residues 111–308 (MKPSQGSGSF…SAKRSLGFLP (198 aa)) form a disordered region. At Ser114 the chain carries Phosphoserine. Over residues 135–148 (RQLSYSDNQASSKR) the composition is skewed to polar residues. Basic and acidic residues predominate over residues 149-159 (GSLETKDDIPF). Positions 160 to 168 (RKVLGNPGR) match the D-box 3 motif. Position 170 is a phosphoserine (Ser170). The span at 172–195 (KTATGSGITVTRTIPSLTSASTPL) shows a compositional bias: polar residues. Ser212 carries the post-translational modification Phosphoserine. The short motif at 223 to 225 (KEN) is the KEN box 2 element. Residues 245 to 259 (SREKQLSLKQSEENR) are compositionally biased toward basic and acidic residues. A compositionally biased stretch (polar residues) spans 266 to 300 (LQSSSFYGSRTGSKDYSSGSTNLDRTNVSGQTPSA). A USP domain is found at 343-953 (QGFSNLGNTC…SGYIFFYMHK (611 aa)). Cys352 acts as the Nucleophile in catalysis. Ser630 is subject to Phosphoserine; by CDK2. Residues Ser652 and Ser654 each carry the phosphoserine modification. Disordered regions lie at residues 673 to 704 (GCEQ…GFDG) and 719 to 831 (KREA…EQKE). Composition is skewed to basic and acidic residues over residues 683–697 (KDSK…KSEL) and 719–734 (KREA…DDKP). In terms of domain architecture, UIM 1 spans 706–725 (SEEELLAAVLEMSKREASPT). Position 772 is a phosphoserine (Ser772). The span at 776–788 (ITKDCDENKENKT) shows a compositional bias: basic and acidic residues. The KEN box 3 signature appears at 784–786 (KEN). 2 consecutive UIM domains span residues 808–827 (REEQ…QEAW) and 830–849 (KEDD…FNNS). The span at 813 to 824 (LQQALAQSLQEQ) shows a compositional bias: low complexity. Residue His908 is the Proton acceptor of the active site.

This sequence belongs to the peptidase C19 family. In terms of assembly, interacts with FZR1/CDH1. Interacts with CDT1. Polyubiquitinated via 'Lys-11'-linked ubiquitin by the APC(CDH1) complex during late mitosis, leading to its degradation. Able to mediate auto-deubiquitination. In terms of processing, phosphorylated at Ser-630 by CDK2 during G1/S phase but not during mitosis; phosphorylation at Ser-630 is required for deubiquitinase activity. Also polyubiquitinated during early G1 phase, without leading to degradation. Phosphorylated at Ser-114 by ATM following DNA damage, which in turn increases its deubiquitination activity towards BLM.

The protein localises to the nucleus. It localises to the chromosome. The catalysed reaction is Thiol-dependent hydrolysis of ester, thioester, amide, peptide and isopeptide bonds formed by the C-terminal Gly of ubiquitin (a 76-residue protein attached to proteins as an intracellular targeting signal).. Deubiquitinase that plays a role in different processes including cell cycle regulation, DNA replication or DNA damage response. Antagonizes the anaphase-promoting complex (APC/C) during G1/S transition by mediating deubiquitination of cyclin-A (CCNA1 and CCNA2), thereby promoting S phase entry. Specifically mediates deubiquitination of 'Lys-11'-linked polyubiquitin chains, a specific ubiquitin-linkage type mediated by the APC/C complex. Phosphorylation at Ser-628 during G1/S phase maximizes the deubiquitinase activity, leading to prevent degradation of cyclin-A (CCNA1 and CCNA2). Plays an important role in the regulation of DNA replication by stabilizing the licensing factor CDT1. Also plays an essential role beyond S-phase entry to promote the efficiency and fidelity of replication by deubiquitinating checkpoint kinase 1/CHK1, promoting its stability. Sustains the DNA damage response (DDR) by deubiquitinating and stabilizing the ATP-dependent DNA helicase BLM. Mechanistically, DNA double-strand breaks (DSB) promotes ATM-mediated phosphorylation of USP37 and enhances the binding between USP37 and BLM. Promotes cell migration by deubiquitinating and stabilizing the epithelial-mesenchymal transition (EMT)-inducing transcription factor SNAI. Plays a role in the regulation of mitotic spindle assembly and mitotic progression by associating with chromatin-associated WAPL and stabilizing it through deubiquitination. This chain is Ubiquitin carboxyl-terminal hydrolase 37 (USP37), found in Canis lupus familiaris (Dog).